Consider the following 797-residue polypeptide: Homoaconitase, mitochondrial (797 aa).

A mitochondrion-targeting transit peptide spans 1 to 47 (MVARFVPSAMTVLVARRGLAMASTRRGWRGLAVNLKPAAGRQWRQAY). [4Fe-4S] cluster-binding residues include cysteine 404, cysteine 471, and cysteine 474.

The protein belongs to the aconitase/IPM isomerase family. [4Fe-4S] cluster is required as a cofactor.

It localises to the mitochondrion. It carries out the reaction (2R,3S)-homoisocitrate = cis-homoaconitate + H2O. It functions in the pathway amino-acid biosynthesis; L-lysine biosynthesis via AAA pathway; L-alpha-aminoadipate from 2-oxoglutarate: step 3/5. Its function is as follows. Catalyzes the reversible hydration of cis-homoaconitate to (2R,3S)-homoisocitrate, a step in the alpha-aminoadipate pathway for lysine biosynthesis. The protein is Homoaconitase, mitochondrial (LYS4) of Chaetomium globosum (strain ATCC 6205 / CBS 148.51 / DSM 1962 / NBRC 6347 / NRRL 1970) (Soil fungus).